The following is a 443-amino-acid chain: MRISSVVEHRTPRVYVCYCLRSLSRPNQTYIGSTPDPIRRLRQHNGLVKQGAFYTRMARPWTMDVVVYGFPSKLAALQFEWSWQKPHASRHLRVMHDDGTRPNKSSATAAVYAGRSSKPLFPATRSSAPSSAASHDSGLNLRKKNRRVRMRSSTVPEYKFLVLRALLASEPFCFWHLHVGFYSEYAYGVWQFMDRANPTRYSVSRITRRPLPPSYPPVACDFRGVQGTNTPLAPPQDATAHTLRTSYPVLPEATTLSAAQKKKRSTSASCAPENEHMWAEEIPHARDAETLGLTWEQLEHAPTIARMEVPDGLMQASSAARGRSRRLRSHTSFLEALDQDASALEAHLVHASRKDMSSSICGLCGGHINRHVPLSYTHCPHACDAVFHLTCLARYSLEQETRAHARTFCLPTSAWCPMCQRPPVPWPEIVRRVFRRAELKVSM.

The region spanning 13 to 93 is the GIY-YIG domain; sequence RVYVCYCLRS…QKPHASRHLR (81 aa). The interval 121-140 is disordered; the sequence is FPATRSSAPSSAASHDSGLN. The SLX1-type zinc finger occupies 361–419; it reads CGLCGGHINRHVPLSYTHCPHACDAVFHLTCLARYSLEQETRAHARTFCLPTSAWCPMC.

Belongs to the SLX1 family. Forms a heterodimer with SLX4. A divalent metal cation serves as cofactor.

It localises to the nucleus. Catalytic subunit of the SLX1-SLX4 structure-specific endonuclease that resolves DNA secondary structures generated during DNA repair and recombination. Has endonuclease activity towards branched DNA substrates, introducing single-strand cuts in duplex DNA close to junctions with ss-DNA. This chain is Structure-specific endonuclease subunit SLX1, found in Malassezia globosa (strain ATCC MYA-4612 / CBS 7966) (Dandruff-associated fungus).